We begin with the raw amino-acid sequence, 833 residues long: Copper-exporting P-type ATPase (833 aa).

2 HMA domains span residues 3-64 and 98-161; these read QTID…YGAT and ESQQ…YGAE. Cysteine 14, cysteine 17, cysteine 109, and cysteine 112 together coordinate Cu(+). The next 6 membrane-spanning stretches (helical) occupy residues 186–206, 217–237, 253–273, 283–303, 437–457, and 463–483; these read WQAI…MIGD, LWLA…GHFY, TLVA…NLWP, LYYE…MLEA, AVFV…WYFF, and IVYT…CALG. The active-site 4-aspartylphosphate intermediate is the aspartate 522. Mg(2+) contacts are provided by aspartate 719 and aspartate 723. Helical transmembrane passes span 778-798 and 800-820; these read LGAF…LWPF and GTLL…ITVV.

Belongs to the cation transport ATPase (P-type) (TC 3.A.3) family. Type IB subfamily.

Its subcellular location is the cell inner membrane. It is found in the cytoplasm. It catalyses the reaction Cu(+)(in) + ATP + H2O = Cu(+)(out) + ADP + phosphate + H(+). Involved in Cu(+) export. Essential for copper tolerance under both aerobic and anaerobic conditions. In terms of biological role, probably also encodes a cytoplasmic copper chaperone CopA(Z) that is produced by programmed ribosomal frameshifting. In Salmonella typhimurium (strain LT2 / SGSC1412 / ATCC 700720), this protein is Copper-exporting P-type ATPase (copA).